The primary structure comprises 351 residues: Methylthioribose-1-phosphate isomerase (351 aa).

Substrate-binding positions include 51-53, arginine 94, and glutamine 199; that span reads RGA. The active-site Proton donor is aspartate 240. 250-251 serves as a coordination point for substrate; sequence NK.

The protein belongs to the EIF-2B alpha/beta/delta subunits family. MtnA subfamily. Homodimer.

It catalyses the reaction 5-(methylsulfanyl)-alpha-D-ribose 1-phosphate = 5-(methylsulfanyl)-D-ribulose 1-phosphate. It functions in the pathway amino-acid biosynthesis; L-methionine biosynthesis via salvage pathway; L-methionine from S-methyl-5-thio-alpha-D-ribose 1-phosphate: step 1/6. Catalyzes the interconversion of methylthioribose-1-phosphate (MTR-1-P) into methylthioribulose-1-phosphate (MTRu-1-P). The polypeptide is Methylthioribose-1-phosphate isomerase (Bacillus cereus (strain ZK / E33L)).